The sequence spans 370 residues: Mitogen-activated protein kinase mpkC (370 aa).

Positions 19-298 (YANVRPVGLG…AAESLEHPYL (280 aa)) constitute a Protein kinase domain. ATP is bound by residues 25–33 (VGLGAFGLV) and K48. D140 acts as the Proton acceptor in catalysis. At T170 the chain carries Phosphothreonine. Residues 170-172 (TGY) carry the TXY motif. At Y172 the chain carries Phosphotyrosine.

The protein belongs to the protein kinase superfamily. Ser/Thr protein kinase family. MAP kinase subfamily. HOG1 sub-subfamily. Mg(2+) is required as a cofactor. In terms of processing, dually phosphorylated on Thr-170 and Tyr-172, which activates the enzyme.

It catalyses the reaction L-seryl-[protein] + ATP = O-phospho-L-seryl-[protein] + ADP + H(+). The catalysed reaction is L-threonyl-[protein] + ATP = O-phospho-L-threonyl-[protein] + ADP + H(+). Its activity is regulated as follows. Activated by tyrosine and threonine phosphorylation. Functionally, mitogen-activated protein kinase required for growth on media where sorbitol or mannitol is the sole carbon source. This chain is Mitogen-activated protein kinase mpkC (mpkC), found in Aspergillus terreus (strain NIH 2624 / FGSC A1156).